The sequence spans 81 residues: MSSTYCGNSSAKMSVHEVSESSLSLEQKTGFAFVGILCIFLGLLIIRCFKILLDPYSSMPSSTWEDEVEEFDKGTFEYALA.

A helical transmembrane segment spans residues 29–49; sequence TGFAFVGILCIFLGLLIIRCF.

This sequence belongs to the cortexin family.

The protein localises to the membrane. The polypeptide is Cortexin-2 (Ctxn2) (Mus musculus (Mouse)).